A 266-amino-acid chain; its full sequence is Thiazole synthase (266 aa).

Lys-95 (schiff-base intermediate with DXP) is an active-site residue. 1-deoxy-D-xylulose 5-phosphate-binding positions include Gly-156, 182 to 183 (AG), and 204 to 205 (NT).

This sequence belongs to the ThiG family. As to quaternary structure, homotetramer. Forms heterodimers with either ThiH or ThiS.

The protein resides in the cytoplasm. The enzyme catalyses [ThiS sulfur-carrier protein]-C-terminal-Gly-aminoethanethioate + 2-iminoacetate + 1-deoxy-D-xylulose 5-phosphate = [ThiS sulfur-carrier protein]-C-terminal Gly-Gly + 2-[(2R,5Z)-2-carboxy-4-methylthiazol-5(2H)-ylidene]ethyl phosphate + 2 H2O + H(+). Its pathway is cofactor biosynthesis; thiamine diphosphate biosynthesis. Catalyzes the rearrangement of 1-deoxy-D-xylulose 5-phosphate (DXP) to produce the thiazole phosphate moiety of thiamine. Sulfur is provided by the thiocarboxylate moiety of the carrier protein ThiS. In vitro, sulfur can be provided by H(2)S. This is Thiazole synthase from Shewanella denitrificans (strain OS217 / ATCC BAA-1090 / DSM 15013).